A 325-amino-acid chain; its full sequence is Helicase VP6-A (325 aa).

Disordered stretches follow at residues 1-126 (MLLA…TNGR) and 175-231 (GVAE…PARI). Basic and acidic residues-rich tracts occupy residues 8-18 (VIKRSSEELKQ), 32-54 (EGGK…KDGE), 61-79 (GQKE…DRRI), and 92-105 (PGER…RGDG). Lys-106 serves as a coordination point for ATP. The segment covering 106 to 122 (KVGGGGGDADAGVGATG) has biased composition (gly residues). The span at 175–229 (GVAEQTERLRDLRRKEKNGTHAKAVERGGRKQRKESHGDAQREGVEEEKTSEEPA) shows a compositional bias: basic and acidic residues.

The protein belongs to the orbivirus VP6 family. Homohexamer.

The protein resides in the virion. It carries out the reaction ATP + H2O = ADP + phosphate + H(+). Functionally, ATP dependent RNA helicase essential for RNA packaging and viral transcription. Possesses ss- and dsRNA-binding capacity. This chain is Helicase VP6-A (Segment-9), found in Bluetongue virus 11 (isolate USA) (BTV 11).